The primary structure comprises 390 residues: 8-amino-7-oxononanoate synthase (390 aa).

A substrate-binding site is contributed by Arg-19. Position 106–107 (106–107 (GY)) interacts with pyridoxal 5'-phosphate. His-131 provides a ligand contact to substrate. Positions 176, 204, and 233 each coordinate pyridoxal 5'-phosphate. At Lys-236 the chain carries N6-(pyridoxal phosphate)lysine. Residue Thr-350 coordinates substrate.

The protein belongs to the class-II pyridoxal-phosphate-dependent aminotransferase family. BioF subfamily. Homodimer. Pyridoxal 5'-phosphate serves as cofactor.

It carries out the reaction 6-carboxyhexanoyl-[ACP] + L-alanine + H(+) = (8S)-8-amino-7-oxononanoate + holo-[ACP] + CO2. The protein operates within cofactor biosynthesis; biotin biosynthesis. Its function is as follows. Catalyzes the decarboxylative condensation of pimeloyl-[acyl-carrier protein] and L-alanine to produce 8-amino-7-oxononanoate (AON), [acyl-carrier protein], and carbon dioxide. The polypeptide is 8-amino-7-oxononanoate synthase (Pseudomonas entomophila (strain L48)).